Consider the following 167-residue polypeptide: Iron-sulfur cluster assembly enzyme ISCU (167 aa).

The transit peptide at 1 to 34 (MAAAGAFRLRRAASALLLRSPRLPARELSAPARL) directs the protein to the mitochondrion. At Ser-14 the chain carries Phosphoserine; by MTOR. A Zn(2+)-binding site is contributed by Pro-46. Cys-69 functions as the Cysteine persulfide intermediate in the catalytic mechanism. Cys-69 carries the post-translational modification Cysteine persulfide. Gly-70, Asp-71, Cys-95, Lys-112, and Cys-138 together coordinate Zn(2+). Residue Cys-138 is the Cysteine persulfide intermediate of the active site. Cys-138 carries the cysteine persulfide modification.

Belongs to the NifU family. As to quaternary structure, homodimer; Tyr-35-mediated dimerization of two iron- and sulfide-containing ISCU subunit bind to the cysteine desulfurase complex. Component of the mitochondrial core iron-sulfur cluster (ISC) complex composed of NFS1, LYRM4, NDUFAB1, ISCU, FXN, and FDX2; this complex is an heterohexamer containing two copies of each monomer. Interacts (D-state) with NFS1 (homodimer form); each monomer interacts with the C-terminal regions of each NFS1 monomer. Interacts (monomer form) with FXN (via ferrous form); the interaction is possible when both are bound to the dimeric form of the cysteine desulfurase complex (NFS1:LYRM4) and enhances FXN interaction to the dimeric form of the cysteine desulfurase complex (NFS1:LYRM4). Interacts with GLRX5. Interacts (D-state) with HSPA9. Interacts (S-state) with HSCB; this interaction stimulates the ATPase activity of HSPA9. In terms of assembly, component of the cytoplasmic core iron-sulfur cluster (ISC) complex composed at least of NFS1, LYRM4, and ISCU; this complex interacts with FXN. Monomer; each monomer binds to the C-terminal regions of NFS1 (cytoplasmic and homodimer form). Interacts with NFS1 (cytoplasmic and homodimer form); this interaction promotes de novo iron-sulfur cluster formation. Interacts with HSCB (cytoplasmic form); this interaction stabilizes the (Fe-S) clusters on ISCU. Post-translationally, phosphorylation at Ser-14 is required for ISCU protein stabilization in the cytosol, whereas dephosphorylation of Ser-14, due to the inhibition of mTORC1 (mammalian target of rapamycin complex 1) complex, leads to degradation of the precursor form and ultimately to a decrease in the mitochondrial mature form. In terms of processing, cysteine persulfide is reduced by thiol-containing molecules such as glutathione and L-cysteine. As to expression, detected in heart, liver, skeletal muscle, brain, pancreas, kidney, lung and placenta.

The protein resides in the mitochondrion. The protein localises to the cytoplasm. It localises to the nucleus. Mitochondrial scaffold protein, of the core iron-sulfur cluster (ISC) assembly complex, that provides the structural architecture on which the [2Fe-2S] clusters are assembled. The core iron-sulfur cluster (ISC) assembly complex is involved in the de novo synthesis of a [2Fe-2S] cluster, the first step of the mitochondrial iron-sulfur protein biogenesis. This process is initiated by the cysteine desulfurase complex (NFS1:LYRM4:NDUFAB1) that produces persulfide which is delivered on the scaffold protein ISCU in a FXN-dependent manner. Then this complex is stabilized by FDX2 which provides reducing equivalents to accomplish the [2Fe-2S] cluster assembly. Finally, the [2Fe-2S] cluster is transferred from ISCU to chaperone proteins, including HSCB, HSPA9 and GLRX5. Exists as two slow interchanging conformational states, a structured (S) and disordered (D) form. May modulate NFS1 desulfurase activity in a zinc-dependent manner. Modulates the interaction between FXN and the cysteine desulfurase complex. Its function is as follows. Cytoplasmic scaffold protein, of the cytoplasmic core iron-sulfur cluster (ISC) assembly complex that provides the structural architecture on which the Fe-S clusters are assembled and may be involved in the cytoplasmic iron-sulfur protein biogenesis. This Homo sapiens (Human) protein is Iron-sulfur cluster assembly enzyme ISCU.